The primary structure comprises 621 residues: Ubiquitin-like-specific protease 1 (621 aa).

Position 2 is an N-acetylserine (serine 2). 2 positions are modified to phosphoserine: serine 21 and serine 25. Disordered regions lie at residues phenylalanine 116–serine 150 and arginine 169–aspartate 196. The segment covering serine 124–valine 141 has biased composition (low complexity). Position 179 is a phosphothreonine (threonine 179). The span at threonine 179 to aspartate 196 shows a compositional bias: polar residues. A Phosphoserine modification is found at serine 264. Positions asparagine 432–lysine 621 are protease. Catalysis depends on residues histidine 514, aspartate 531, and cysteine 580.

It belongs to the peptidase C48 family.

It carries out the reaction Hydrolysis of the alpha-linked peptide bond in the sequence Gly-Gly-|-Ala-Thr-Tyr at the C-terminal end of the small ubiquitin-like modifier (SUMO) propeptide, Smt3, leading to the mature form of the protein. A second reaction involves the cleavage of an epsilon-linked peptide bond between the C-terminal glycine of the mature SUMO and the lysine epsilon-amino group of the target protein.. Protease that catalyzes two essential functions in the SUMO pathway: processing of full-length SMT3 to its mature form and deconjugation of SMT3 from targeted proteins. Has an essential role in the G2/M phase of the cell cycle. The chain is Ubiquitin-like-specific protease 1 (ULP1) from Saccharomyces cerevisiae (strain ATCC 204508 / S288c) (Baker's yeast).